Consider the following 245-residue polypeptide: tRNA pseudouridine synthase A (245 aa).

The Nucleophile role is filled by Asp52. Tyr111 is a binding site for substrate.

Belongs to the tRNA pseudouridine synthase TruA family. In terms of assembly, homodimer.

The catalysed reaction is uridine(38/39/40) in tRNA = pseudouridine(38/39/40) in tRNA. Formation of pseudouridine at positions 38, 39 and 40 in the anticodon stem and loop of transfer RNAs. The sequence is that of tRNA pseudouridine synthase A from Rickettsia felis (strain ATCC VR-1525 / URRWXCal2) (Rickettsia azadi).